A 453-amino-acid polypeptide reads, in one-letter code: Tubulin alpha chain (453 aa).

Gln-11 lines the GTP pocket. An N6-acetyllysine modification is found at Lys-40. The GTP site is built by Glu-71, Gly-144, Thr-145, Thr-179, Asn-206, and Asn-228. Mg(2+) is bound at residue Glu-71. Glu-254 is a catalytic residue.

It belongs to the tubulin family. Dimer of alpha and beta chains. A typical microtubule is a hollow water-filled tube with an outer diameter of 25 nm and an inner diameter of 15 nM. Alpha-beta heterodimers associate head-to-tail to form protofilaments running lengthwise along the microtubule wall with the beta-tubulin subunit facing the microtubule plus end conferring a structural polarity. Microtubules usually have 13 protofilaments but different protofilament numbers can be found in some organisms and specialized cells. Requires Mg(2+) as cofactor. Post-translationally, undergoes a tyrosination/detyrosination cycle, the cyclic removal and re-addition of a C-terminal tyrosine residue by the enzymes tubulin tyrosine carboxypeptidase (TTCP) and tubulin tyrosine ligase (TTL), respectively. Acetylation of alpha chains at Lys-40 stabilizes microtubules and affects affinity and processivity of microtubule motors. This modification has a role in multiple cellular functions, ranging from cell motility, cell cycle progression or cell differentiation to intracellular trafficking and signaling.

Its subcellular location is the cytoplasm. The protein localises to the cytoskeleton. It carries out the reaction GTP + H2O = GDP + phosphate + H(+). In terms of biological role, tubulin is the major constituent of microtubules, a cylinder consisting of laterally associated linear protofilaments composed of alpha- and beta-tubulin heterodimers. Microtubules grow by the addition of GTP-tubulin dimers to the microtubule end, where a stabilizing cap forms. Below the cap, tubulin dimers are in GDP-bound state, owing to GTPase activity of alpha-tubulin. The protein is Tubulin alpha chain of Plasmodium falciparum (isolate K1 / Thailand).